The chain runs to 299 residues: Zinc finger protein-like 1 homolog (299 aa).

Residues 1 to 43 (MGLCKCPKRLVTNQFCFEHRVNVCEHCMVQSHPKCIVQSYLQW) form a B box-type; degenerate zinc finger. The RING-type; atypical zinc-finger motif lies at 53–101 (CTLCGTTLEQGDCVRLVCYHVFHWDCLNARQAALPANTAPRGHQCPACS). The disordered stretch occupies residues 200-231 (AGDYASSRRPLLPRQSPIGGTDRDDNKYQRRT). A Phosphoserine modification is found at Ser-215. Residues 256–276 (WFLVTAGILAFVLFVYLMAWL) traverse the membrane as a helical segment.

Belongs to the ZFPL1 family.

Its subcellular location is the membrane. This Drosophila melanogaster (Fruit fly) protein is Zinc finger protein-like 1 homolog.